Consider the following 62-residue polypeptide: Amolopin-P2 (62 aa).

An N-terminal signal peptide occupies residues 1 to 22; that stretch reads MFTLKKSLLLLFFLGTISLSLC. A propeptide spanning residues 23 to 44 is cleaved from the precursor; sequence EQERGADEEENGGEVTEQEVKR.

The protein belongs to the frog skin active peptide (FSAP) family. Amolopin subfamily. In terms of tissue distribution, expressed by the skin glands.

It localises to the secreted. Functionally, antimicrobial peptide with activity against Gram-positive bacteria. Has been tested against S.aureus (MIC=37.5 ug/mL), against B.pumilus (MIC=75.0 ug/mL), B.cereus (no activity detected). Does not show activity against Gram-negative bacteria (E.coli, B.dysenteriae, A.calcoaceticus, P.aeruginosa) and fungi (C.albicans). Does not show hemolytic activity against rabbit erythrocytes. This Amolops loloensis (Lolokou Sucker Frog) protein is Amolopin-P2.